The sequence spans 141 residues: Large ribosomal subunit protein uL16 (141 aa).

The protein belongs to the universal ribosomal protein uL16 family. Part of the 50S ribosomal subunit.

Its function is as follows. Binds 23S rRNA and is also seen to make contacts with the A and possibly P site tRNAs. This chain is Large ribosomal subunit protein uL16, found in Campylobacter fetus subsp. fetus (strain 82-40).